The chain runs to 200 residues: Protein GrpE (200 aa).

Basic and acidic residues predominate over residues 1-10 (MQEKDSKDVT). Residues 1–57 (MQEKDSKDVTMEDEETIASQEEIEVEGNSEESSKEEESNNSEISDENLSEENLKLKD) form a disordered region. Over residues 11-29 (MEDEETIASQEEIEVEGNS) the composition is skewed to acidic residues.

The protein belongs to the GrpE family. In terms of assembly, homodimer.

Its subcellular location is the cytoplasm. In terms of biological role, participates actively in the response to hyperosmotic and heat shock by preventing the aggregation of stress-denatured proteins, in association with DnaK and GrpE. It is the nucleotide exchange factor for DnaK and may function as a thermosensor. Unfolded proteins bind initially to DnaJ; upon interaction with the DnaJ-bound protein, DnaK hydrolyzes its bound ATP, resulting in the formation of a stable complex. GrpE releases ADP from DnaK; ATP binding to DnaK triggers the release of the substrate protein, thus completing the reaction cycle. Several rounds of ATP-dependent interactions between DnaJ, DnaK and GrpE are required for fully efficient folding. The sequence is that of Protein GrpE from Clostridium acetobutylicum (strain ATCC 824 / DSM 792 / JCM 1419 / IAM 19013 / LMG 5710 / NBRC 13948 / NRRL B-527 / VKM B-1787 / 2291 / W).